Here is a 425-residue protein sequence, read N- to C-terminus: GTPase Obg (425 aa).

In terms of domain architecture, Obg spans 1–158 (MFKDYAKIHV…LWLELELKLL (158 aa)). Positions 159 to 329 (ADVGLVGFPN…LIYRTYRLLE (171 aa)) constitute an OBG-type G domain. Residues 165 to 172 (GFPNAGKS), 190 to 194 (FTTLE), 212 to 215 (DIPG), 282 to 285 (NKTD), and 310 to 312 (SAL) each bind GTP. Mg(2+) contacts are provided by Ser172 and Thr192. The 81-residue stretch at 341–421 (VPDERETDVT…IGRFEFEYSE (81 aa)) folds into the OCT domain.

This sequence belongs to the TRAFAC class OBG-HflX-like GTPase superfamily. OBG GTPase family. Monomer. Requires Mg(2+) as cofactor.

It is found in the cytoplasm. Its function is as follows. An essential GTPase which binds GTP, GDP and possibly (p)ppGpp with moderate affinity, with high nucleotide exchange rates and a fairly low GTP hydrolysis rate. Plays a role in control of the cell cycle, stress response, ribosome biogenesis and in those bacteria that undergo differentiation, in morphogenesis control. The sequence is that of GTPase Obg from Desulforudis audaxviator (strain MP104C).